The chain runs to 390 residues: GTPase Obg (390 aa).

The Obg domain occupies 1-159 (MKFVDEASIL…RELLLELMLL (159 aa)). The interval 127–147 (NTRFKSSVNRTPRQKTNGTPG) is disordered. Polar residues predominate over residues 129–145 (RFKSSVNRTPRQKTNGT). In terms of domain architecture, OBG-type G spans 160 to 333 (ADVGMLGMPN…LCWDVMTFII (174 aa)). Residues 166-173 (GMPNAGKS), 191-195 (FTTLV), 213-216 (DIPG), 283-286 (NKID), and 314-316 (SAA) contribute to the GTP site. Mg(2+) contacts are provided by Ser173 and Thr193.

Belongs to the TRAFAC class OBG-HflX-like GTPase superfamily. OBG GTPase family. In terms of assembly, monomer. Mg(2+) is required as a cofactor.

It localises to the cytoplasm. In terms of biological role, an essential GTPase which binds GTP, GDP and possibly (p)ppGpp with moderate affinity, with high nucleotide exchange rates and a fairly low GTP hydrolysis rate. Plays a role in control of the cell cycle, stress response, ribosome biogenesis and in those bacteria that undergo differentiation, in morphogenesis control. This Shigella dysenteriae serotype 1 (strain Sd197) protein is GTPase Obg.